Here is a 98-residue protein sequence, read N- to C-terminus: Small ribosomal subunit protein bS6 (98 aa).

This sequence belongs to the bacterial ribosomal protein bS6 family.

Binds together with bS18 to 16S ribosomal RNA. The polypeptide is Small ribosomal subunit protein bS6 (Staphylococcus carnosus (strain TM300)).